The primary structure comprises 24 residues: Erythromycin resistance leader peptide (24 aa).

The segment covering 1–14 has biased composition (low complexity); that stretch reads MSMGIAARPPRAAL. The tract at residues 1–24 is disordered; it reads MSMGIAARPPRAALLPPPSVPRSR. Over residues 15–24 the composition is skewed to pro residues; it reads LPPPSVPRSR.

Functionally, this peptide is involved in the control mechanism of the synthesis of the macrolide-lincosamide-streptogramin B resistance protein. The chain is Erythromycin resistance leader peptide from Streptomyces fradiae (Streptomyces roseoflavus).